Consider the following 261-residue polypeptide: MVAPAHNYESRNILDLLSLKGKNAVVFGGARGIGHAICSVFAEAGANAFIVYNTTPGEKAAKEIAQANGVKTYTCKCDVTIPKEVEHAFAEIQKVFDTIDIVVPNNGICTGKSAIDMTYEEFANEINVNLLGVFNVAHNAGPIFQKQGHGSLVATASMSGVVVNVPQQQCAYNTSKAGVIQLIKSLAVEWRKFARVNCVSPGYTTSDMTGGKFHKEWEPYTPFERNGLAKEIASAYLYLASDAASYASGTNLIVDGGYTSI.

Residues isoleucine 33, aspartate 78, and asparagine 105 each coordinate NADP(+). Serine 157 serves as the catalytic Proton donor. Tyrosine 172, lysine 176, and serine 206 together coordinate NADP(+). Residue tyrosine 172 is the Proton acceptor of the active site. Catalysis depends on lysine 176, which acts as the Lowers pKa of active site Tyr.

It belongs to the short-chain dehydrogenases/reductases (SDR) family.

It localises to the cytoplasm. Its subcellular location is the nucleus. This is an uncharacterized protein from Schizosaccharomyces pombe (strain 972 / ATCC 24843) (Fission yeast).